We begin with the raw amino-acid sequence, 202 residues long: Recombination protein RecR (202 aa).

The C4-type zinc-finger motif lies at 56 to 71 (CVVCGTVSDGELCRIC). The Toprim domain occupies 79-179 (TMICVVEEPK…TVTRLASGLP (101 aa)).

It belongs to the RecR family.

May play a role in DNA repair. It seems to be involved in an RecBC-independent recombinational process of DNA repair. It may act with RecF and RecO. The chain is Recombination protein RecR from Nocardia farcinica (strain IFM 10152).